A 557-amino-acid polypeptide reads, in one-letter code: Formate--tetrahydrofolate ligase (557 aa).

67–74 (TPAGEGKT) is an ATP binding site.

The protein belongs to the formate--tetrahydrofolate ligase family.

It catalyses the reaction (6S)-5,6,7,8-tetrahydrofolate + formate + ATP = (6R)-10-formyltetrahydrofolate + ADP + phosphate. The protein operates within one-carbon metabolism; tetrahydrofolate interconversion. The protein is Formate--tetrahydrofolate ligase of Cereibacter sphaeroides (strain KD131 / KCTC 12085) (Rhodobacter sphaeroides).